Reading from the N-terminus, the 506-residue chain is AMP phosphorylase (506 aa).

Residues Gly-168, 194–199 (SRAITG), and Thr-203 each bind AMP. Asp-256 functions as the Proton donor in the catalytic mechanism. Positions 264 and 288 each coordinate AMP.

The protein belongs to the thymidine/pyrimidine-nucleoside phosphorylase family. Type 2 subfamily.

It catalyses the reaction AMP + phosphate = alpha-D-ribose 1,5-bisphosphate + adenine. The catalysed reaction is CMP + phosphate = cytosine + alpha-D-ribose 1,5-bisphosphate. It carries out the reaction UMP + phosphate = alpha-D-ribose 1,5-bisphosphate + uracil. Catalyzes the conversion of AMP and phosphate to adenine and ribose 1,5-bisphosphate (R15P). Exhibits phosphorylase activity toward CMP and UMP in addition to AMP. Functions in an archaeal AMP degradation pathway, together with R15P isomerase and RubisCO. The sequence is that of AMP phosphorylase from Methanococcoides burtonii (strain DSM 6242 / NBRC 107633 / OCM 468 / ACE-M).